The primary structure comprises 383 residues: Succinyl-diaminopimelate desuccinylase (383 aa).

Residue His73 participates in Zn(2+) binding. Residue Asp75 is part of the active site. Position 107 (Asp107) interacts with Zn(2+). Glu141 (proton acceptor) is an active-site residue. Zn(2+) contacts are provided by Glu142, Glu170, and His356.

Belongs to the peptidase M20A family. DapE subfamily. As to quaternary structure, homodimer. It depends on Zn(2+) as a cofactor. Requires Co(2+) as cofactor.

It catalyses the reaction N-succinyl-(2S,6S)-2,6-diaminopimelate + H2O = (2S,6S)-2,6-diaminopimelate + succinate. It functions in the pathway amino-acid biosynthesis; L-lysine biosynthesis via DAP pathway; LL-2,6-diaminopimelate from (S)-tetrahydrodipicolinate (succinylase route): step 3/3. Functionally, catalyzes the hydrolysis of N-succinyl-L,L-diaminopimelic acid (SDAP), forming succinate and LL-2,6-diaminopimelate (DAP), an intermediate involved in the bacterial biosynthesis of lysine and meso-diaminopimelic acid, an essential component of bacterial cell walls. The polypeptide is Succinyl-diaminopimelate desuccinylase (Pseudomonas paraeruginosa (strain DSM 24068 / PA7) (Pseudomonas aeruginosa (strain PA7))).